The chain runs to 223 residues: Peptidyl-prolyl cis-trans isomerase FKBP16-3, chloroplastic (223 aa).

A chloroplast-targeting transit peptide spans 1 to 36; the sequence is MAASSPSLLLPLGSASRNGLTTKNPNSSRYIAARVI. The transit peptide at 37-76 directs the protein to the thylakoid; it reads ASETREQSCKISNLSSRREAMLLVLGVSGGLSMSSLAAYA. Positions 124 to 216 constitute a PPIase FKBP-type domain; sequence GFQVAANYVA…IFDVSLEFIP (93 aa).

Belongs to the FKBP-type PPIase family.

The protein localises to the plastid. The protein resides in the chloroplast thylakoid lumen. The enzyme catalyses [protein]-peptidylproline (omega=180) = [protein]-peptidylproline (omega=0). In terms of biological role, PPIases accelerate the folding of proteins. It catalyzes the cis-trans isomerization of proline imidic peptide bonds in oligopeptides. This Arabidopsis thaliana (Mouse-ear cress) protein is Peptidyl-prolyl cis-trans isomerase FKBP16-3, chloroplastic (FKBP16-3).